A 224-amino-acid polypeptide reads, in one-letter code: Pyridoxine/pyridoxamine 5'-phosphate oxidase (224 aa).

Residues 14–17 (REHY) and Lys-76 each bind substrate. Residues 71–76 (RTVLMK), 86–87 (YT), Arg-92, Lys-93, and Gln-115 contribute to the FMN site. 3 residues coordinate substrate: Tyr-133, Arg-137, and Ser-141. FMN is bound by residues 150–151 (QS) and Trp-196. 202–204 (RLH) is a substrate binding site. Arg-206 provides a ligand contact to FMN.

It belongs to the pyridoxamine 5'-phosphate oxidase family. Homodimer. FMN serves as cofactor.

The enzyme catalyses pyridoxamine 5'-phosphate + O2 + H2O = pyridoxal 5'-phosphate + H2O2 + NH4(+). It catalyses the reaction pyridoxine 5'-phosphate + O2 = pyridoxal 5'-phosphate + H2O2. The protein operates within cofactor metabolism; pyridoxal 5'-phosphate salvage; pyridoxal 5'-phosphate from pyridoxamine 5'-phosphate: step 1/1. Its pathway is cofactor metabolism; pyridoxal 5'-phosphate salvage; pyridoxal 5'-phosphate from pyridoxine 5'-phosphate: step 1/1. Catalyzes the oxidation of either pyridoxine 5'-phosphate (PNP) or pyridoxamine 5'-phosphate (PMP) into pyridoxal 5'-phosphate (PLP). The protein is Pyridoxine/pyridoxamine 5'-phosphate oxidase of Streptomyces avermitilis (strain ATCC 31267 / DSM 46492 / JCM 5070 / NBRC 14893 / NCIMB 12804 / NRRL 8165 / MA-4680).